Reading from the N-terminus, the 118-residue chain is Large ribosomal subunit protein bL19 (118 aa).

Belongs to the bacterial ribosomal protein bL19 family.

This protein is located at the 30S-50S ribosomal subunit interface and may play a role in the structure and function of the aminoacyl-tRNA binding site. This chain is Large ribosomal subunit protein bL19, found in Hahella chejuensis (strain KCTC 2396).